The primary structure comprises 316 residues: L-lactate dehydrogenase (316 aa).

NAD(+)-binding positions include V15, D37, K42, Y68, and 82–83; that span reads GL. Substrate contacts are provided by residues Q85, R91, and 123-126; that span reads NPVD. NAD(+)-binding positions include 121 to 123 and T146; that span reads ASN. 151–154 provides a ligand contact to substrate; that stretch reads DTSR. The beta-D-fructose 1,6-bisphosphate site is built by R156 and H171. The Proton acceptor role is filled by H178. A Phosphotyrosine modification is found at Y222. Residue T231 participates in substrate binding.

It belongs to the LDH/MDH superfamily. LDH family. Homotetramer.

Its subcellular location is the cytoplasm. The catalysed reaction is (S)-lactate + NAD(+) = pyruvate + NADH + H(+). It participates in fermentation; pyruvate fermentation to lactate; (S)-lactate from pyruvate: step 1/1. With respect to regulation, allosterically activated by fructose 1,6-bisphosphate (FBP). Functionally, catalyzes the conversion of lactate to pyruvate. The polypeptide is L-lactate dehydrogenase (Borreliella afzelii (strain PKo) (Borrelia afzelii)).